A 421-amino-acid polypeptide reads, in one-letter code: MVLLKFHGGCQQIGMSCVEVETQKGRVLLDCGMSPDTGEIPKVDDKAVDAVIVSHAHLDHCGAIPFYKFKKIYCTHPTADLMFITWRDTLNLTKAYKEEDIQHAMENIECLNYYEERQITENIKFKFYNAGHILGSASIYLEVDGKKILYTGDINEGVSRTLLPADTDIDEIDVLIIESTYGSPLDIKPARKTLERQLIEEISETIENGGKVIIPVFAIGRAQEILLIINNYIRSGKLRDVPIYTDGSLIHATAVYMSYINWLNPKIKNMVENRINPFGEIKKADESLVFNKEPCIIVSTSGMVQGGPVLKYLKLLKDPKNKLILTGYQAEGTLGRELEEGAKEIQPFKNKIPIRGKVVKIEFSAHGDYNSLVRYIKKIPKPEKAIVMHGERYQSLSFAMTIWKTLKIPTFVPVRGTILPI.

Zn(2+) is bound by residues His-55, His-57, Asp-59, His-60, His-132, Asp-153, and His-389.

The protein belongs to the metallo-beta-lactamase superfamily. RNA-metabolizing metallo-beta-lactamase-like family. In terms of assembly, forms homodimers on heating to 60 degrees Celsius which may be the active form. Requires Zn(2+) as cofactor.

Its activity is regulated as follows. Inhibited by imidazole. Its function is as follows. A 5'-3' exoribonuclease with a strong reference for 5'-monophosphorylated RNA and no endoribonuclease activty. This Methanocaldococcus jannaschii (strain ATCC 43067 / DSM 2661 / JAL-1 / JCM 10045 / NBRC 100440) (Methanococcus jannaschii) protein is RNase J-like protein.